A 197-amino-acid polypeptide reads, in one-letter code: Large ribosomal subunit protein uL10 (197 aa).

The tract at residues 162-197 is disordered; it reads READGETAETPAQETASDDSKSTKAEASDASTTENK. Residues 179–188 are compositionally biased toward basic and acidic residues; that stretch reads DDSKSTKAEA.

It belongs to the universal ribosomal protein uL10 family. In terms of assembly, part of the ribosomal stalk of the 50S ribosomal subunit. The N-terminus interacts with L11 and the large rRNA to form the base of the stalk. The C-terminus forms an elongated spine to which L12 dimers bind in a sequential fashion forming a multimeric L10(L12)X complex.

Forms part of the ribosomal stalk, playing a central role in the interaction of the ribosome with GTP-bound translation factors. The protein is Large ribosomal subunit protein uL10 of Oenococcus oeni (strain ATCC BAA-331 / PSU-1).